The chain runs to 329 residues: GMP reductase (329 aa).

The Thioimidate intermediate role is filled by Cys-178. Position 207-230 (207-230 (VIADGGIRTHGDIAKSIRMGATMV)) interacts with NADP(+).

This sequence belongs to the IMPDH/GMPR family. GuaC type 2 subfamily.

The enzyme catalyses IMP + NH4(+) + NADP(+) = GMP + NADPH + 2 H(+). In terms of biological role, catalyzes the irreversible NADPH-dependent deamination of GMP to IMP. It functions in the conversion of nucleobase, nucleoside and nucleotide derivatives of G to A nucleotides, and in maintaining the intracellular balance of A and G nucleotides. This is GMP reductase from Lactococcus lactis subsp. cremoris (strain SK11).